Here is a 282-residue protein sequence, read N- to C-terminus: uncharacterized protein (282 aa).

The active-site Proton donor is Tyr50. Residue His115 coordinates substrate.

It belongs to the aldo/keto reductase family.

This is an uncharacterized protein from Saccharomyces cerevisiae (strain ATCC 204508 / S288c) (Baker's yeast).